The chain runs to 148 residues: Large ribosomal subunit protein uL15 (148 aa).

The segment at 12–52 is disordered; the sequence is ERKNRKRVGRGGGSGWGGTSGKGHKGQNARSGGGVPAWFEG. Residues 21–32 are compositionally biased toward gly residues; the sequence is RGGGSGWGGTSG.

The protein belongs to the universal ribosomal protein uL15 family. As to quaternary structure, part of the 50S ribosomal subunit.

Binds to the 23S rRNA. The polypeptide is Large ribosomal subunit protein uL15 (Maridesulfovibrio salexigens (strain ATCC 14822 / DSM 2638 / NCIMB 8403 / VKM B-1763) (Desulfovibrio salexigens)).